Reading from the N-terminus, the 197-residue chain is Large ribosomal subunit protein bL9 (197 aa).

The segment at 178–197 (GEFFDPEAQEDEAAAGETAQ) is disordered. The span at 181–191 (FDPEAQEDEAA) shows a compositional bias: acidic residues.

The protein belongs to the bacterial ribosomal protein bL9 family.

Its function is as follows. Binds to the 23S rRNA. This chain is Large ribosomal subunit protein bL9, found in Bradyrhizobium sp. (strain BTAi1 / ATCC BAA-1182).